A 113-amino-acid chain; its full sequence is Transcription initiation factor IIA subunit 2 (113 aa).

Belongs to the TFIIA subunit 2 family. In terms of assembly, TFIIA is a heterodimer of the large unprocessed subunit 1 and a small subunit gamma. It was originally believed to be a heterotrimer of an alpha, a beta and a gamma subunit.

Its subcellular location is the nucleus. TFIIA is a component of the transcription machinery of RNA polymerase II and plays an important role in transcriptional activation. TFIIA in a complex with TBP mediates transcriptional activity. This chain is Transcription initiation factor IIA subunit 2, found in Caenorhabditis elegans.